The primary structure comprises 454 residues: UPF0210 protein Blon_2054/BLIJ_2131 (454 aa).

The protein belongs to the UPF0210 family. As to quaternary structure, homodimer.

In Bifidobacterium longum subsp. infantis (strain ATCC 15697 / DSM 20088 / JCM 1222 / NCTC 11817 / S12), this protein is UPF0210 protein Blon_2054/BLIJ_2131.